Here is a 466-residue protein sequence, read N- to C-terminus: Cysteine--tRNA ligase (466 aa).

Cysteine 28 is a Zn(2+) binding site. The short motif at 30-40 (PTVYNYIHIGN) is the 'HIGH' region element. Residues cysteine 208, histidine 233, and glutamate 237 each contribute to the Zn(2+) site. Residues 265-269 (KMSKS) carry the 'KMSKS' region motif. ATP is bound at residue lysine 268.

The protein belongs to the class-I aminoacyl-tRNA synthetase family. As to quaternary structure, monomer. The cofactor is Zn(2+).

The protein localises to the cytoplasm. It catalyses the reaction tRNA(Cys) + L-cysteine + ATP = L-cysteinyl-tRNA(Cys) + AMP + diphosphate. This is Cysteine--tRNA ligase from Staphylococcus aureus (strain bovine RF122 / ET3-1).